The primary structure comprises 632 residues: 2-oxoacid:ferredoxin oxidoreductase subunit alpha (632 aa).

A YPITP motif motif is present at residues 254–258; it reads YPITP. 2 residues coordinate substrate: T257 and R345.

Heterodimer composed of an alpha and a beta subunit.

It catalyses the reaction a 2-oxocarboxylate + 2 oxidized [2Fe-2S]-[ferredoxin] + CoA = an acyl-CoA + 2 reduced [2Fe-2S]-[ferredoxin] + CO2 + H(+). Functionally, catalyzes the coenzyme A-dependent oxidative decarboxylation of different 2-oxoacids such as 2-oxoglutarate, pyruvate and 2-oxobutyrate to form their CoA derivatives. This is 2-oxoacid:ferredoxin oxidoreductase subunit alpha from Saccharolobus solfataricus (Sulfolobus solfataricus).